The primary structure comprises 596 residues: Genetic interactor of prohibitins 3, mitochondrial (596 aa).

A mitochondrion-targeting transit peptide spans 1–21; it reads MLNLCHALRGVRQFSCSVIVK. One can recognise a CP-type G domain in the interval 113–305; the sequence is ESTLNDILNY…LFDLPGYSTS (193 aa).

The protein belongs to the TRAFAC class YlqF/YawG GTPase family. GEP3 subfamily.

The protein localises to the mitochondrion. Functionally, interacts genetically with prohibitins and thus may be involved in the mitochondrial lipid metabolism. The chain is Genetic interactor of prohibitins 3, mitochondrial (GEP3) from Saccharomyces cerevisiae (strain AWRI796) (Baker's yeast).